The sequence spans 257 residues: Type III pantothenate kinase (257 aa).

Residue 6-13 (DVGNTSTK) participates in ATP binding. 109-112 (GADR) is a substrate binding site. The active-site Proton acceptor is aspartate 111. A K(+)-binding site is contributed by aspartate 132. Threonine 135 is an ATP binding site. Threonine 187 provides a ligand contact to substrate.

Belongs to the type III pantothenate kinase family. As to quaternary structure, homodimer. NH4(+) serves as cofactor. It depends on K(+) as a cofactor.

Its subcellular location is the cytoplasm. It catalyses the reaction (R)-pantothenate + ATP = (R)-4'-phosphopantothenate + ADP + H(+). It participates in cofactor biosynthesis; coenzyme A biosynthesis; CoA from (R)-pantothenate: step 1/5. Catalyzes the phosphorylation of pantothenate (Pan), the first step in CoA biosynthesis. This is Type III pantothenate kinase from Anaplasma marginale (strain St. Maries).